A 682-amino-acid polypeptide reads, in one-letter code: MGTQRSMFIVSFLFKLFLFLSVHVRAQRTTTNFAFRGFNGNQSKIRIEGAAMIKPDGLLRLTDRKSNVTGTAFYHKPVRLLNRNSTNVTIRSFSTSFVFVIIPSSSSNKGFGFTFTLSPTPYRLNAGSAQYLGVFNKENNGDPRNHVFAVEFDTVQGSRDDNTDRIGNDIGLNYNSRTSDLQEPVVYYNNDDHNKKEDFQLESGNPIQALLEYDGATQMLNVTVYPARLGFKPTKPLISQHVPKLLEIVQEEMYVGFTASTGKGQSSAHYVMGWSFSSGGERPIADVLILSELPPPPPNKAKKEGLNSQVIVMIVALSAVMLVMLVLLFFFVMYKKRLGQEETLEDWEIDHPRRLRYRDLYVATDGFKKTGIIGTGGFGTVFKGKLPNSDPIAVKKIIPSSRQGVREFVAEIESLGKLRHKNLVNLQGWCKHKNDLLLIYDYIPNGSLDSLLYTVPRRSGAVLSWNARFQIAKGIASGLLYLHEEWEKIVIHRDVKPSNVLIDSKMNPRLGDFGLARLYERGTLSETTALVGTIGYMAPELSRNGNPSSASDVFAFGVLLLEIVCGRKPTDSGTFFLVDWVMELHANGEILSAIDPRLGSGYDGGEARLALAVGLLCCHQKPASRPSMRIVLRYLNGEENVPEIDDEWGYSKSSRSEFGSKLVGYVSSTSITRVSSTSRISQ.

The signal sequence occupies residues 1–26; that stretch reads MGTQRSMFIVSFLFKLFLFLSVHVRA. Residues 27–310 lie on the Extracellular side of the membrane; that stretch reads QRTTTNFAFR…AKKEGLNSQV (284 aa). A legume-lectin like region spans residues 29–277; that stretch reads TTTNFAFRGF…AHYVMGWSFS (249 aa). Residues 311 to 331 traverse the membrane as a helical segment; sequence IVMIVALSAVMLVMLVLLFFF. Topologically, residues 332 to 682 are cytoplasmic; sequence VMYKKRLGQE…RVSSTSRISQ (351 aa). A Protein kinase domain is found at 367–641; sequence FKKTGIIGTG…LRYLNGEENV (275 aa). ATP-binding positions include 373-381 and K395; that span reads IGTGGFGTV. Residue D494 is the Proton acceptor of the active site.

This sequence in the C-terminal section; belongs to the protein kinase superfamily. Ser/Thr protein kinase family. In the N-terminal section; belongs to the leguminous lectin family. Strongly expressed in the vascular system and trichomes of the leaves. Also expressed in guard cells, anthers, stigmas and germinating seeds, but not found in petals or roots. Increased susceptibility to the bacteria Pseudomonas syringae, characterized by stronger necrotic symptoms and higher bacterial proliferation.

The protein resides in the cell membrane. It catalyses the reaction L-seryl-[protein] + ATP = O-phospho-L-seryl-[protein] + ADP + H(+). The enzyme catalyses L-threonyl-[protein] + ATP = O-phospho-L-threonyl-[protein] + ADP + H(+). Functionally, involved in negative regulation of abscisic acid response in seed germination. Its function is as follows. Involved in resistance response to the pathogenic bacteria Pseudomonas syringae. In Arabidopsis thaliana (Mouse-ear cress), this protein is L-type lectin-domain containing receptor kinase VI.2.